Consider the following 161-residue polypeptide: Phosphopantetheine adenylyltransferase (161 aa).

Ser-11 provides a ligand contact to substrate. Residues 11–12 (SF) and His-19 each bind ATP. Residues Lys-43, Leu-75, and Arg-89 each contribute to the substrate site. Residues 90 to 92 (GLR), Glu-100, and 125 to 131 (YSFISSS) each bind ATP.

Belongs to the bacterial CoaD family. Homohexamer. The cofactor is Mg(2+).

Its subcellular location is the cytoplasm. It carries out the reaction (R)-4'-phosphopantetheine + ATP + H(+) = 3'-dephospho-CoA + diphosphate. Its pathway is cofactor biosynthesis; coenzyme A biosynthesis; CoA from (R)-pantothenate: step 4/5. Functionally, reversibly transfers an adenylyl group from ATP to 4'-phosphopantetheine, yielding dephospho-CoA (dPCoA) and pyrophosphate. The polypeptide is Phosphopantetheine adenylyltransferase (Staphylococcus haemolyticus (strain JCSC1435)).